Here is a 69-residue protein sequence, read N- to C-terminus: Amphipathic peptide CT2 (69 aa).

An N-terminal signal peptide occupies residues methionine 1–alanine 23. At phenylalanine 36 the chain carries Phenylalanine amide. A propeptide spanning residues glycine 40–arginine 69 is cleaved from the precursor.

The protein belongs to the non-disulfide-bridged peptide (NDBP) superfamily. Short antimicrobial peptide (group 4) family. As to expression, expressed by the venom gland.

The protein localises to the secreted. The protein resides in the target cell membrane. In terms of biological role, amphipathic peptide that shows antibacterial activities against both Gram-positive (MIC=10 uM, 20 uM and 20 uM against S.aureus, B.subtilis and S.agalactiae, respectively) and Gram-negative bacteria (MIC=20 uM, 10 uM, and 10 uM against E.coli, S.typhi, and P.aeruginosa, respectively). Is mildly hemolytic at its MIC range, but shows a strong cytotoxic activity at higher concentrations, reaching 84% lysis at 50 uM. The polypeptide is Amphipathic peptide CT2 (Vaejovis mexicanus smithi (Mexican scorpion)).